A 274-amino-acid chain; its full sequence is NH(3)-dependent NAD(+) synthetase (274 aa).

46–53 (GISGGQDS) serves as a coordination point for ATP. D52 is a binding site for Mg(2+). Residue R140 coordinates deamido-NAD(+). T160 provides a ligand contact to ATP. E165 provides a ligand contact to Mg(2+). 2 residues coordinate deamido-NAD(+): K173 and D180. Positions 189 and 211 each coordinate ATP. Position 260 to 261 (260 to 261 (HK)) interacts with deamido-NAD(+).

This sequence belongs to the NAD synthetase family. In terms of assembly, homodimer.

The catalysed reaction is deamido-NAD(+) + NH4(+) + ATP = AMP + diphosphate + NAD(+) + H(+). The protein operates within cofactor biosynthesis; NAD(+) biosynthesis; NAD(+) from deamido-NAD(+) (ammonia route): step 1/1. Catalyzes the ATP-dependent amidation of deamido-NAD to form NAD. Uses ammonia as a nitrogen source. This Streptococcus mutans serotype c (strain ATCC 700610 / UA159) protein is NH(3)-dependent NAD(+) synthetase.